We begin with the raw amino-acid sequence, 400 residues long: Na(+)/H(+) antiporter NhaA (400 aa).

The next 12 helical transmembrane spans lie at 26–46, 71–91, 107–127, 137–157, 166–186, 189–209, 212–232, 233–253, 273–293, 299–319, 340–360, and 373–393; these read AGGI…NSPL, LIHW…GMEV, IFPA…YWFI, GWAI…ALLS, IFLL…IALF, HGLS…LILL, FKVS…ASVL, KSGV…PLKG, FVIL…GIDV, PLLL…IFGF, IFAV…LASL, and LSRL…YLFL.

It belongs to the NhaA Na(+)/H(+) (TC 2.A.33) antiporter family.

The protein localises to the cell inner membrane. It catalyses the reaction Na(+)(in) + 2 H(+)(out) = Na(+)(out) + 2 H(+)(in). Its function is as follows. Na(+)/H(+) antiporter that extrudes sodium in exchange for external protons. The polypeptide is Na(+)/H(+) antiporter NhaA (Haemophilus influenzae (strain PittEE)).